The primary structure comprises 569 residues: Urease subunit beta (569 aa).

Residues 131 to 569 enclose the Urease domain; that stretch reads GGIDTHIHFI…LSLAQLYNLF (439 aa). Residues H136, H138, and K219 each coordinate Ni(2+). K219 carries the N6-carboxylysine modification. H221 contacts substrate. Positions 248 and 274 each coordinate Ni(2+). Catalysis depends on H322, which acts as the Proton donor. D362 provides a ligand contact to Ni(2+).

Belongs to the metallo-dependent hydrolases superfamily. Urease alpha subunit family. In terms of assembly, heterohexamer of 3 UreA (alpha) and 3 UreB (beta) subunits. It depends on Ni cation as a cofactor. In terms of processing, carboxylation allows a single lysine to coordinate two nickel ions.

Its subcellular location is the cytoplasm. It carries out the reaction urea + 2 H2O + H(+) = hydrogencarbonate + 2 NH4(+). It participates in nitrogen metabolism; urea degradation; CO(2) and NH(3) from urea (urease route): step 1/1. This Helicobacter felis (strain ATCC 49179 / CCUG 28539 / NCTC 12436 / CS1) protein is Urease subunit beta.